The primary structure comprises 4114 residues: Ferrichrome siderophore peptide synthetase (4114 aa).

4 consecutive Carrier domains span residues 797 to 874 (DPAT…QSSG), 1947 to 2021 (TDSE…IDKL), 3020 to 3093 (TQSE…MQSS), and 3574 to 3650 (QALS…SQTN). Ser-835, Ser-1982, Ser-3054, and Ser-3611 each carry O-(pantetheine 4'-phosphoryl)serine. Residues 4040 to 4061 (LDYSHHSQHSTHDRTPPSTPHV) are disordered. Positions 4041–4054 (DYSHHSQHSTHDRT) are enriched in basic and acidic residues.

This sequence belongs to the ATP-dependent AMP-binding enzyme family. It depends on pantetheine 4'-phosphate as a cofactor.

The protein operates within siderophore biosynthesis; ferrichrome biosynthesis. In terms of biological role, multidomain peptide synthetase involved in ferrichrome biosynthesis. The sequence is that of Ferrichrome siderophore peptide synthetase (SID2) from Mycosarcoma maydis (Corn smut fungus).